The chain runs to 798 residues: Protocadherin beta-2 (798 aa).

The first 30 residues, 1–30 (MEAGEGKERVPKQRQVLIFFVLLGIAQASC), serve as a signal peptide directing secretion. The Extracellular segment spans residues 31–692 (QPRHYSVAEE…AQADLLTVYL (662 aa)). Cadherin domains lie at 37 to 135 (VAEE…SPVF), 136 to 244 (LDKE…VPEF), 249 to 349 (YEVQ…PPEL), 354 to 453 (LINQ…APAF), and 458 to 563 (YTLF…SPFV). N171 carries an N-linked (GlcNAc...) asparagine glycan. An N6-acetyllysine modification is found at K299. N420 and N438 each carry an N-linked (GlcNAc...) asparagine glycan. Residue N569 is glycosylated (N-linked (GlcNAc...) asparagine). The 104-residue stretch at 570–673 (GSAPCTELVP…LVDGFSQPYL (104 aa)) folds into the Cadherin 6 domain. A helical transmembrane segment spans residues 693 to 713 (VVALASVSSLFLFSVLLFVAV). Residues 714 to 798 (RLCRRSRAAS…PSFRKSFEFT (85 aa)) are Cytoplasmic-facing.

Its subcellular location is the cell membrane. In terms of biological role, potential calcium-dependent cell-adhesion protein. May be involved in the establishment and maintenance of specific neuronal connections in the brain. This chain is Protocadherin beta-2 (PCDHB2), found in Homo sapiens (Human).